The sequence spans 291 residues: Transmembrane protein 41B (291 aa).

A disordered region spans residues 1-38; the sequence is MAKGRVAERSQMGADHTTPVGDGAAGTRGPAAPGSRDY. Residue Thr18 is modified to Phosphothreonine. Over residues 21–34 the composition is skewed to low complexity; that stretch reads GDGAAGTRGPAAPG. Ser35 carries the post-translational modification Phosphoserine. 6 helical membrane passes run 52-72, 109-129, 147-169, 197-217, 225-245, and 262-282; these read MSLLILVSIFLSAAFVMFLVY, FYVQVLVAYFATYIFLQTFAI, LALFLVCLCSGLGASFCYMLSYL, LINYIIFLRITPFLPNWFINI, PLKVFFIGTFLGVAPPSFVAI, and SWNSIFILMILAVLSILPAIF. Residues 140-251 form a VTT domain; required for its function in autophagy region; that stretch reads GFLYPFPLAL…FVAIKAGTTL (112 aa).

The protein belongs to the TMEM41 family. Interacts with VMP1. Interacts with COPA, COPB1, VDAC1 and ERLIN2. Interacts with ATG2A. Interacts with SURF4.

The protein resides in the endoplasmic reticulum membrane. The protein localises to the endomembrane system. The enzyme catalyses a 1,2-diacyl-sn-glycero-3-phospho-L-serine(in) = a 1,2-diacyl-sn-glycero-3-phospho-L-serine(out). The catalysed reaction is cholesterol(in) = cholesterol(out). It catalyses the reaction a 1,2-diacyl-sn-glycero-3-phosphocholine(in) = a 1,2-diacyl-sn-glycero-3-phosphocholine(out). It carries out the reaction a 1,2-diacyl-sn-glycero-3-phosphoethanolamine(in) = a 1,2-diacyl-sn-glycero-3-phosphoethanolamine(out). Its function is as follows. Phospholipid scramblase involved in lipid homeostasis and membrane dynamics processes. Has phospholipid scramblase activity toward cholesterol and phosphatidylserine, as well as phosphatidylethanolamine and phosphatidylcholine. Required for autophagosome formation: participates in early stages of autophagosome biogenesis at the endoplasmic reticulum (ER) membrane by reequilibrating the leaflets of the ER as lipids are extracted by ATG2 (ATG2A or ATG2B) to mediate autophagosome assembly. In addition to autophagy, involved in other processes in which phospholipid scramblase activity is required. Required for normal motor neuron development. The polypeptide is Transmembrane protein 41B (Pongo abelii (Sumatran orangutan)).